The sequence spans 137 residues: Small ribosomal subunit protein uS9c (137 aa).

The protein belongs to the universal ribosomal protein uS9 family.

The protein localises to the plastid. It is found in the chloroplast. This is Small ribosomal subunit protein uS9c (rps9) from Gracilaria tenuistipitata var. liui (Red alga).